The primary structure comprises 115 residues: Guanylin (115 aa).

A signal peptide spans 1 to 21 (MNACVLSVLCLLGAVAVLVEG). Residues 22-100 (VTVQDGDLSF…LQRLEAIAQD (79 aa)) constitute a propeptide that is removed on maturation. 3 cysteine pairs are disulfide-bonded: cysteine 69–cysteine 82, cysteine 104–cysteine 112, and cysteine 107–cysteine 115.

It belongs to the guanylin family.

Its subcellular location is the secreted. In terms of biological role, endogenous activator of intestinal guanylate cyclase. It stimulates this enzyme through the same receptor binding region as the heat-stable enterotoxins. This is Guanylin (GUCA2A) from Notomys alexis (Spinifex hopping mouse).